The sequence spans 367 residues: MTTLAWFAGRSMVLDLAALTSAFTVGYLLKSTSTPTSTPTSTDKAGTPPGSTIHHYGYPQGSVTKPNNSKTEKENGSPKDSKGNVPDCPYKYLVGLYGHHHFAGFVEALQPTLKDEDPEKYTLVLDIMDAVHLCLILVDDICDDSPKRKNQTTAHLLFGSCETANRAYLVLTKVINRAMRTRPVLGAELVRALELILEGQDLSLVWRRDGLAAFDAEEGGDKVSVYKKMAQLKTGTLFVLLGRLLNDGGAQLDDVLLRLGWYSQLQNDCKNIYSGEYANNKGAIAEDLRNGEMSFPVVVALGDQTTSSQIRKAFGSHSDGDIFDALDALQSSCIKNKCSQALQEAGRGLENLLAIWGRREHMDSLGS.

Residues 1–22 (MTTLAWFAGRSMVLDLAALTSA) form the signal peptide. The span at 32–42 (TSTPTSTPTST) shows a compositional bias: low complexity. Positions 32 to 84 (TSTPTSTPTSTDKAGTPPGSTIHHYGYPQGSVTKPNNSKTEKENGSPKDSKGN) are disordered. N-linked (GlcNAc...) asparagine glycosylation occurs at asparagine 67. A compositionally biased stretch (basic and acidic residues) spans 70–82 (KTEKENGSPKDSK). Residue histidine 132 participates in substrate binding. Residues aspartate 139 and aspartate 143 each coordinate Mg(2+). Arginine 148 contributes to the substrate binding site. An N-linked (GlcNAc...) asparagine glycan is attached at asparagine 150. 5 residues coordinate substrate: lysine 233, threonine 234, glutamine 264, asparagine 271, and lysine 281.

The protein belongs to the FPP/GGPP synthase family. Requires Mg(2+) as cofactor.

Its pathway is secondary metabolite biosynthesis. Its function is as follows. Prenyltransferase; part of the gene cluster that mediates the biosynthesis of paspalitrems, indole-diterpene (IDT) mycotoxins that are potent tremorgens in mammals. The geranylgeranyl diphosphate (GGPP) synthase idtG is proposed to catalyze the first step in IDT biosynthesis via catalysis of a series of iterative condensations of isopentenyl diphosphate (IPP) with dimethylallyl diphosphate (DMAPP), geranyl diphosphate (GPP), and farnesyl diphosphate (FPP), to form GGPP. Condensation of indole-3-glycerol phosphate with GGPP by the prenyltransferase idtC then forms 3-geranylgeranylindole (3-GGI). Epoxidation of the two terminal alkenes of the geranylgeranyl moiety by the FAD-dependent monooxygenase idtM, and cyclization by the terpene cyclase idtB then leads to the production of paspaline. The cytochrome P450 monooxygenase idtP then catalyzes oxidative elimination of the pendant methyl group at C-12 of paspaline and generates the C-10 ketone to yield 13-desoxypaxilline. The cytochrome P450 monooxygenase idtQ may catalyze the C-13 oxidation of 13-desoxypaxilline to afford paxilline. Considering that both paspalicine and paxilline were detected in C.paspali, idtQ also catalyzes the formation of paspalinine from 13-desoxypaxilline via paspalicine as an intermediate. Finally, the alpha-prenyltransferase idtF prenylates paspalinine at the C-20 or the C-21 positions to yield paspalitrems A and C, respectively. The hydroxylation of paspalitrem A at C-32 by a still unknown oxidase affords paspalitrem B. The sequence is that of Prenyltransferase idtC from Claviceps paspali (Rye ergot fungus).